Reading from the N-terminus, the 156-residue chain is PopC secretion inhibitor (156 aa).

The tract at residues 1-89 (MNPGSAPWER…PVRSRAEVHQ (89 aa)) is disordered. The span at 8-28 (WERRTRERMRAMSRKNGEWGD) shows a compositional bias: basic and acidic residues.

In terms of assembly, interacts with PopC in non-starving cells.

It is found in the cytoplasm. Its activity is regulated as follows. In response to starvation, RelA is activated resulting in the accumulation of (p)ppGpp, which causes the degradation of PopD in an FtsH(D)-dependent manner, thereby releasing pre-formed PopC for secretion. In terms of biological role, inhibitor of protease PopC. In non-starving cells, forms a cytoplasmic complex with PopC and inhibits PopC secretion and activity. The chain is PopC secretion inhibitor from Myxococcus xanthus (strain DK1622).